A 125-amino-acid polypeptide reads, in one-letter code: Small ribosomal subunit protein uS12m (125 aa).

Disordered stretches follow at residues 1-29 (MPTK…QCPQ) and 105-125 (LGIP…PKSK). Basic and acidic residues predominate over residues 10 to 23 (HGREEKQRTDRTRA).

It belongs to the universal ribosomal protein uS12 family.

The protein localises to the mitochondrion. Functionally, protein S12 is involved in the translation initiation step. This chain is Small ribosomal subunit protein uS12m (RPS12), found in Oryza sativa subsp. japonica (Rice).